The following is a 340-amino-acid chain: Phenylalanine--tRNA ligase alpha subunit (340 aa).

A Mg(2+)-binding site is contributed by E255.

It belongs to the class-II aminoacyl-tRNA synthetase family. Phe-tRNA synthetase alpha subunit type 1 subfamily. Tetramer of two alpha and two beta subunits. It depends on Mg(2+) as a cofactor.

Its subcellular location is the cytoplasm. It catalyses the reaction tRNA(Phe) + L-phenylalanine + ATP = L-phenylalanyl-tRNA(Phe) + AMP + diphosphate + H(+). The protein is Phenylalanine--tRNA ligase alpha subunit of Desulforamulus reducens (strain ATCC BAA-1160 / DSM 100696 / MI-1) (Desulfotomaculum reducens).